The following is a 326-amino-acid chain: Tetraacyldisaccharide 4'-kinase (326 aa).

55-62 (TAGGNGKT) is a binding site for ATP.

The protein belongs to the LpxK family.

It carries out the reaction a lipid A disaccharide + ATP = a lipid IVA + ADP + H(+). Its pathway is glycolipid biosynthesis; lipid IV(A) biosynthesis; lipid IV(A) from (3R)-3-hydroxytetradecanoyl-[acyl-carrier-protein] and UDP-N-acetyl-alpha-D-glucosamine: step 6/6. Its function is as follows. Transfers the gamma-phosphate of ATP to the 4'-position of a tetraacyldisaccharide 1-phosphate intermediate (termed DS-1-P) to form tetraacyldisaccharide 1,4'-bis-phosphate (lipid IVA). The protein is Tetraacyldisaccharide 4'-kinase of Klebsiella pneumoniae subsp. pneumoniae (strain ATCC 700721 / MGH 78578).